The chain runs to 281 residues: MAIKKYKPTTNGRRNMTSIDYKATLTTSTPEKSLLAAKNSKAGRNNRGLITTRHKGGGHKQKYRIIDFKRNKRDVVGTIATIEYDPNRNAFICLVNYLDGEKRYILFAKGMTVGMKIVASEHADIKVGNAAPLKNIPEGTLIHNVELKPGKGGQMARSAGTSVQILGKDDDGKYVTLRLTSGEVRKVLADCYATIGEVGNEEYNLVNWGKAGRNRWRGIRPTVRGSVMNPNDHPHGGGEGRTPIGRKSPVTPWGKKALGVKTRNTKKPSEKLIVRKRNAKK.

The disordered stretch occupies residues 222–281 (TVRGSVMNPNDHPHGGGEGRTPIGRKSPVTPWGKKALGVKTRNTKKPSEKLIVRKRNAKK).

The protein belongs to the universal ribosomal protein uL2 family. In terms of assembly, part of the 50S ribosomal subunit. Forms a bridge to the 30S subunit in the 70S ribosome.

In terms of biological role, one of the primary rRNA binding proteins. Required for association of the 30S and 50S subunits to form the 70S ribosome, for tRNA binding and peptide bond formation. It has been suggested to have peptidyltransferase activity; this is somewhat controversial. Makes several contacts with the 16S rRNA in the 70S ribosome. The protein is Large ribosomal subunit protein uL2 of Mesoplasma florum (strain ATCC 33453 / NBRC 100688 / NCTC 11704 / L1) (Acholeplasma florum).